Here is a 398-residue protein sequence, read N- to C-terminus: Protein CDKN2AIP homolog A (398 aa).

In terms of domain architecture, XRN2-binding (XTBD) spans 19 to 124; the sequence is LELVHGECES…KVKKRGISSS (106 aa). The segment at 118 to 245 is disordered; sequence KRGISSSNEG…SDNALKPTRR (128 aa). A compositionally biased stretch (basic and acidic residues) spans 131–147; the sequence is EPCKKQKSSDHGERESS. Composition is skewed to polar residues over residues 154-163, 189-199, and 226-238; these read SDGNVPSTSL, RRSLPVSNAKS, and QTSMKGPAQSSDN.

This sequence belongs to the CARF family.

The protein localises to the nucleus. The protein resides in the nucleoplasm. May regulate DNA damage response and cell proliferation. This chain is Protein CDKN2AIP homolog A (cdkn2aip-a), found in Xenopus laevis (African clawed frog).